The following is a 227-amino-acid chain: Cytosolic-abundant heat soluble protein 106094 (227 aa).

The tract at residues 1-28 (MEAMNMNIPRDAMFVPPPESEQNGYHEK) is disordered. Residues 90 to 140 (VEEARRDYAAKTRENEMLGQQYEKELERKSEAYRKHQEVEADKIRKELEKQ) adopt a coiled-coil conformation. CAHS motif regions lie at residues 122–140 (YRKHQEVEADKIRKELEKQ) and 159–177 (QKRMIDLECRYAKKDMDRE). Positions 198 to 227 (LDSSAAGTESGGHVVSQSEKFTERNREMKR) are disordered. The segment covering 217–227 (KFTERNREMKR) has biased composition (basic and acidic residues).

Belongs to the Cytosolic-abundant heat soluble protein (CAHS) family.

The protein localises to the cytoplasm. Its function is as follows. CAHS proteins are cytosolic heat soluble proteins that seem to contribute to the anhydrobiosis in tardigrades, but their specific mechanisms are yet to be identified. It is possible that protection during anhydrobiosis might occur via the stabilization of vitrifying small molecules such as sugars, but not via the direct glass transition of CAHS proteins themselves. In Paramacrobiotus richtersi (Water bear), this protein is Cytosolic-abundant heat soluble protein 106094.